The primary structure comprises 181 residues: MRRLLACSAGVLCFSQLGALELFLSPKIGITSVYQFGSNGGSDGTSSGKGVSFDRLIGRVDLGLILVNGLTISASAESSLTNVFVRAQALIGYAVRVGGLRAIVSSGVNICGDSCATSEGKSSAWYSKLLYSVPLNLEVQYYLTSFAGVAVAASTAVGVRDFNFKEFTLPLSLTIGPTFRV.

The first 19 residues, 1–19 (MRRLLACSAGVLCFSQLGA), serve as a signal peptide directing secretion.

This is an uncharacterized protein from Treponema pallidum (strain Nichols).